The following is a 154-amino-acid chain: Lipoprotein signal peptidase (154 aa).

4 helical membrane passes run 8–28 (AFFL…YWAL), 36–56 (IVVN…AFSF), 66–86 (WLFA…LLTK), and 88–108 (HHWL…GNLY). Active-site residues include Asp-118 and Asp-136. Residues 129 to 149 (WPVFNLADVAITLGVILMLIA) traverse the membrane as a helical segment.

This sequence belongs to the peptidase A8 family.

It is found in the cell inner membrane. It carries out the reaction Release of signal peptides from bacterial membrane prolipoproteins. Hydrolyzes -Xaa-Yaa-Zaa-|-(S,diacylglyceryl)Cys-, in which Xaa is hydrophobic (preferably Leu), and Yaa (Ala or Ser) and Zaa (Gly or Ala) have small, neutral side chains.. It functions in the pathway protein modification; lipoprotein biosynthesis (signal peptide cleavage). Its function is as follows. This protein specifically catalyzes the removal of signal peptides from prolipoproteins. The polypeptide is Lipoprotein signal peptidase (Dichelobacter nodosus (strain VCS1703A)).